The primary structure comprises 861 residues: Leucine--tRNA ligase (861 aa).

The 'HIGH' region signature appears at 42–52 (PYPSGKLHMGH). The 'KMSKS' region signature appears at 620–624 (KMSKS). Position 623 (lysine 623) interacts with ATP.

It belongs to the class-I aminoacyl-tRNA synthetase family.

Its subcellular location is the cytoplasm. It catalyses the reaction tRNA(Leu) + L-leucine + ATP = L-leucyl-tRNA(Leu) + AMP + diphosphate. This Buchnera aphidicola subsp. Schizaphis graminum (strain Sg) protein is Leucine--tRNA ligase.